We begin with the raw amino-acid sequence, 130 residues long: MSMQDPIADMLTRIRNGQAANKVAISMPSSKLKVAIANVLAEEGYIANVKVSEGVKPELEITLKYFQGKPVVESIQRVSRPGLRIYKRKNELPKVMGGLGVAVVSTSKGIMTDRKARQAGLGGEIICYVA.

The protein belongs to the universal ribosomal protein uS8 family. In terms of assembly, part of the 30S ribosomal subunit. Contacts proteins S5 and S12.

One of the primary rRNA binding proteins, it binds directly to 16S rRNA central domain where it helps coordinate assembly of the platform of the 30S subunit. The sequence is that of Small ribosomal subunit protein uS8 from Histophilus somni (strain 129Pt) (Haemophilus somnus).